The chain runs to 122 residues: NADH-quinone oxidoreductase subunit A (122 aa).

3 helical membrane passes run 10 to 30 (MIVLIFLLLGILLPVVALTLG), 66 to 86 (IFALLFVIFDVETLFLYPWAV), and 91 to 111 (LGLFALIEMLIFVVMLLVGLA).

This sequence belongs to the complex I subunit 3 family. As to quaternary structure, NDH-1 is composed of 14 different subunits. Subunits NuoA, H, J, K, L, M, N constitute the membrane sector of the complex.

The protein localises to the cell membrane. It carries out the reaction a quinone + NADH + 5 H(+)(in) = a quinol + NAD(+) + 4 H(+)(out). NDH-1 shuttles electrons from NADH, via FMN and iron-sulfur (Fe-S) centers, to quinones in the respiratory chain. The immediate electron acceptor for the enzyme in this species is believed to be a menaquinone. Couples the redox reaction to proton translocation (for every two electrons transferred, four hydrogen ions are translocated across the cytoplasmic membrane), and thus conserves the redox energy in a proton gradient. This chain is NADH-quinone oxidoreductase subunit A, found in Bacillus thuringiensis subsp. konkukian (strain 97-27).